A 323-amino-acid polypeptide reads, in one-letter code: Mas-related G-protein coupled receptor member B4 (323 aa).

At 1 to 34 (MSPTTQAWSINNTVVKENYYTEILSCITTFNTLN) the chain is on the extracellular side. N-linked (GlcNAc...) asparagine glycosylation occurs at Asn-11. The chain crosses the membrane as a helical span at residues 35–55 (FLIVIISVVGMAGNATVLWLL). The Cytoplasmic segment spans residues 56-63 (GFHMHRNA). Residues 64–84 (FSVYVLNLAGADFLYLCAQTV) traverse the membrane as a helical segment. Residues 85 to 98 (YSLECVLQFDNSYF) are Extracellular-facing. Residues 99 to 119 (YFLLTILMFNYLAGFCMIAAI) form a helical membrane-spanning segment. At 120–147 (STERCLSVTWPIWYHCQRPRHTSATVCA) the chain is on the cytoplasmic side. A helical membrane pass occupies residues 148-168 (LFWAFSLLLSLLLGQGCGFLF). Topologically, residues 169 to 180 (SKFDYSFCRYCN) are extracellular. The helical transmembrane segment at 181-201 (FIATAFLIVIFMVLFVSSLAL) threads the bilayer. The Cytoplasmic portion of the chain corresponds to 202-224 (LAKIICGSHRIPVTRFYVTIALT). Residues 225–245 (VLVFIFFGLPIGICVFLLPWI) form a helical membrane-spanning segment. Over 246-255 (HMMLSSFFYE) the chain is Extracellular. The helical transmembrane segment at 256–276 (MVTLLSCVNSCANPIIYFFVG) threads the bilayer. Over 277-323 (SIRHHRLQRQTLKLLLQRAMQDTPEEEGGERGPSQKSEDLEVVRCSS) the chain is Cytoplasmic. Positions 298–323 (DTPEEEGGERGPSQKSEDLEVVRCSS) are disordered. The segment covering 312 to 323 (KSEDLEVVRCSS) has biased composition (basic and acidic residues).

This sequence belongs to the G-protein coupled receptor 1 family. Mas subfamily. As to expression, expressed strongly in newborn dorsal root ganglia, adult dorsal root ganglia and trigeminal ganlia.

It is found in the membrane. Its function is as follows. Orphan receptor. Probably involved in the function of nociceptive neurons. May regulate nociceptor function and/or development, including the sensation or modulation of pain. The polypeptide is Mas-related G-protein coupled receptor member B4 (Mrgprb4) (Rattus norvegicus (Rat)).